The primary structure comprises 86 residues: Large ribosomal subunit protein uL23 (86 aa).

The protein belongs to the universal ribosomal protein uL23 family. As to quaternary structure, part of the 50S ribosomal subunit. Contacts protein L29.

In terms of biological role, binds to 23S rRNA. One of the proteins that surrounds the polypeptide exit tunnel on the outside of the ribosome. This Pyrococcus horikoshii (strain ATCC 700860 / DSM 12428 / JCM 9974 / NBRC 100139 / OT-3) protein is Large ribosomal subunit protein uL23.